Consider the following 231-residue polypeptide: Protein OPG061 (231 aa).

This sequence belongs to the orthopoxvirus OPG058 family.

The protein resides in the host nucleus. The protein localises to the host nucleolus. This is Protein OPG061 (OPG061) from Vaccinia virus (strain L-IVP) (VACV).